Here is a 335-residue protein sequence, read N- to C-terminus: tRNA N6-adenosine threonylcarbamoyltransferase (335 aa).

Histidine 110 and histidine 114 together coordinate Fe cation. Substrate-binding positions include 132–136 (LVSGG), aspartate 165, glycine 178, and asparagine 271. Aspartate 299 lines the Fe cation pocket.

This sequence belongs to the KAE1 / TsaD family. The cofactor is Fe(2+).

The protein localises to the cytoplasm. The catalysed reaction is L-threonylcarbamoyladenylate + adenosine(37) in tRNA = N(6)-L-threonylcarbamoyladenosine(37) in tRNA + AMP + H(+). In terms of biological role, required for the formation of a threonylcarbamoyl group on adenosine at position 37 (t(6)A37) in tRNAs that read codons beginning with adenine. Is involved in the transfer of the threonylcarbamoyl moiety of threonylcarbamoyl-AMP (TC-AMP) to the N6 group of A37, together with TsaE and TsaB. TsaD likely plays a direct catalytic role in this reaction. The polypeptide is tRNA N6-adenosine threonylcarbamoyltransferase (Campylobacter jejuni subsp. jejuni serotype O:23/36 (strain 81-176)).